The chain runs to 61 residues: UPF0391 membrane protein Ajs_0703 (61 aa).

The next 2 helical transmembrane spans lie at 5-25 (AIIF…GVAA) and 33-53 (VLFV…LLGI).

The protein belongs to the UPF0391 family.

The protein resides in the cell membrane. The sequence is that of UPF0391 membrane protein Ajs_0703 from Acidovorax sp. (strain JS42).